Reading from the N-terminus, the 138-residue chain is Acidic phospholipase A2 RV-7 (138 aa).

Residues 1 to 16 form the signal peptide; that stretch reads MRTLWIVAVCLIGVEG. Disulfide bonds link Cys42–Cys131, Cys44–Cys60, Cys59–Cys111, Cys65–Cys138, Cys66–Cys104, Cys73–Cys97, and Cys91–Cys102. Residues Tyr43, Gly45, and Gly47 each coordinate Ca(2+). Residue His63 is part of the active site. A Ca(2+)-binding site is contributed by Asp64. Residue Asp105 is part of the active site.

The protein belongs to the phospholipase A2 family. Group II subfamily. D49 sub-subfamily. In terms of assembly, heterodimer of a weakly toxic basic protein having phospholipase A2 activity (RV-4) and a non-toxic acidic protein which inhibits its enzymatic activity but potentiates its lethal potency and neurotoxicity (RV-7). Ca(2+) is required as a cofactor. As to expression, expressed by the venom gland.

The protein resides in the secreted. It carries out the reaction a 1,2-diacyl-sn-glycero-3-phosphocholine + H2O = a 1-acyl-sn-glycero-3-phosphocholine + a fatty acid + H(+). Functionally, heterodimer: RV-4/RV-7 targets the presynaptic sites of the neuromuscular junction. Monomer: snake venom phospholipase A2 (PLA2) RV-7 that has low enzymatic activity and is not toxic. It inhibits the enzymatic activity of RV-4 in vitro but potentiates its lethal potency and neurotoxicity. It may facilitate the specific binding of RV-4 to its presynaptic binding sites, probably by acting as a chaperone, minimizing distraction and destruction of RV-4 en route to the site of action by reducing non-specific binding to muscle and other organs. PLA2 catalyzes the calcium-dependent hydrolysis of the 2-acyl groups in 3-sn-phosphoglycerides. The protein is Acidic phospholipase A2 RV-7 of Daboia siamensis (Eastern Russel's viper).